A 531-amino-acid chain; its full sequence is Probable peptide ABC transporter periplasmic-binding protein y4tO (531 aa).

Positions 1 to 32 (MTISRRDLFKAGLAAGAALSVPSLLRAQTAVA) form a signal peptide, tat-type signal.

This sequence belongs to the bacterial solute-binding protein 5 family. In terms of processing, predicted to be exported by the Tat system. The position of the signal peptide cleavage has not been experimentally proven.

The protein localises to the periplasm. Its function is as follows. Probably part of the binding-protein-dependent transport system y4tOPQRS for a peptide. The chain is Probable peptide ABC transporter periplasmic-binding protein y4tO from Sinorhizobium fredii (strain NBRC 101917 / NGR234).